Consider the following 257-residue polypeptide: Type III pantothenate kinase (257 aa).

6-13 (DCGNTNTV) contributes to the ATP binding site. A substrate-binding site is contributed by 107–110 (GPDR). Catalysis depends on aspartate 109, which acts as the Proton acceptor. Residue aspartate 129 participates in K(+) binding. Threonine 132 lines the ATP pocket. Threonine 184 is a binding site for substrate.

The protein belongs to the type III pantothenate kinase family. In terms of assembly, homodimer. NH4(+) serves as cofactor. Requires K(+) as cofactor.

It is found in the cytoplasm. It carries out the reaction (R)-pantothenate + ATP = (R)-4'-phosphopantothenate + ADP + H(+). Its pathway is cofactor biosynthesis; coenzyme A biosynthesis; CoA from (R)-pantothenate: step 1/5. In terms of biological role, catalyzes the phosphorylation of pantothenate (Pan), the first step in CoA biosynthesis. This is Type III pantothenate kinase from Cereibacter sphaeroides (strain ATCC 17025 / ATH 2.4.3) (Rhodobacter sphaeroides).